Here is a 510-residue protein sequence, read N- to C-terminus: 1,3-beta-glucanosyltransferase gas5 (510 aa).

A signal peptide spans 1–22 (MNFLHFLTTSLLLLGGSRLALA). Cys-70 and Cys-99 are oxidised to a cystine. Tyr-88 contributes to the (1,3-beta-D-glucosyl)n binding site. N-linked (GlcNAc...) asparagine glycosylation is present at Asn-147. (1,3-beta-D-glucosyl)n contacts are provided by Asn-158, Glu-159, Asp-200, and Arg-205. Glu-159 acts as the Proton donor in catalysis. 2 disulfide bridges follow: Cys-214/Cys-353 and Cys-232/Cys-264. N-linked (GlcNAc...) asparagine glycans are attached at residues Asn-216 and Asn-252. The active-site Nucleophile is the Glu-261. Tyr-300 contacts (1,3-beta-D-glucosyl)n. 3 N-linked (GlcNAc...) asparagine glycosylation sites follow: Asn-318, Asn-337, and Asn-397. Positions 424–456 (QSSTSGSSSGSSSASTTASSSSVSSGSSISSGS) are disordered. Residue Ser-485 is the site of GPI-anchor amidated serine attachment. A propeptide spans 486-510 (SASTFNLSRFYVFAGILAISGLVFA) (removed in mature form). N-linked (GlcNAc...) asparagine glycosylation is present at Asn-491.

The protein belongs to the glycosyl hydrolase 72 family. Post-translationally, the GPI-anchor is attached to the protein in the endoplasmic reticulum and serves to target the protein to the cell surface. There, the glucosamine-inositol phospholipid moiety is cleaved off and the GPI-modified mannoprotein is covalently attached via its lipidless GPI glycan remnant to the 1,6-beta-glucan of the outer cell wall layer.

Its subcellular location is the secreted. It localises to the cell wall. The protein resides in the membrane. In terms of biological role, splits internally a 1,3-beta-glucan molecule and transfers the newly generated reducing end (the donor) to the non-reducing end of another 1,3-beta-glucan molecule (the acceptor) forming a 1,3-beta linkage, resulting in the elongation of 1,3-beta-glucan chains in the cell wall. This chain is 1,3-beta-glucanosyltransferase gas5 (gas5), found in Schizosaccharomyces pombe (strain 972 / ATCC 24843) (Fission yeast).